Reading from the N-terminus, the 404-residue chain is L-cysteine:1D-myo-inositol 2-amino-2-deoxy-alpha-D-glucopyranoside ligase 1 (404 aa).

Residue Cys-47 coordinates Zn(2+). L-cysteinyl-5'-AMP is bound by residues Cys-47–Thr-50, Thr-62, and Asn-85–Thr-87. The 'HIGH' region signature appears at Ile-49–His-59. The short motif at Glu-188–Pro-193 is the 'ERGGDP' region element. Trp-228 is an L-cysteinyl-5'-AMP binding site. Cys-232 contacts Zn(2+). Gly-250–Asp-252 is a binding site for L-cysteinyl-5'-AMP. His-257 provides a ligand contact to Zn(2+). Ile-284 is a binding site for L-cysteinyl-5'-AMP. The 'KMSKS' region motif lies at Lys-290–Ser-294.

This sequence belongs to the class-I aminoacyl-tRNA synthetase family. MshC subfamily. In terms of assembly, monomer. Zn(2+) is required as a cofactor.

It catalyses the reaction 1D-myo-inositol 2-amino-2-deoxy-alpha-D-glucopyranoside + L-cysteine + ATP = 1D-myo-inositol 2-(L-cysteinylamino)-2-deoxy-alpha-D-glucopyranoside + AMP + diphosphate + H(+). Functionally, catalyzes the ATP-dependent condensation of GlcN-Ins and L-cysteine to form L-Cys-GlcN-Ins. The sequence is that of L-cysteine:1D-myo-inositol 2-amino-2-deoxy-alpha-D-glucopyranoside ligase 1 from Corynebacterium jeikeium (strain K411).